A 109-amino-acid polypeptide reads, in one-letter code: MLKVSKSPSLVRLKTRGESVCPISKTVDSFEVSVEYIPRGAVLAIEEFKKMVDSYRGREILHEELAVDLLEKVKAAVNPPYVKVTVKSYYIGVEVEVVAESGGVPPVYI.

Cysteine 21 serves as the catalytic Thioimide intermediate. Aspartate 28 acts as the Proton donor/acceptor in catalysis. Residues aspartate 28, 43–46 (LAIE), and 62–63 (HE) contribute to the substrate site.

Belongs to the archaeosine synthase type 2 family. As to quaternary structure, forms a symmetric tunnel-fold (T-fold) homodecamer of two head-to-head facing pentameric subunits, with 10 active sites at the intermonomer interfaces.

The catalysed reaction is 7-cyano-7-carbaguanosine(15) in tRNA + NH4(+) = archaeosine(15) in tRNA. It participates in tRNA modification; archaeosine-tRNA biosynthesis. In terms of biological role, is responsible for the final step in the biosynthesis of archaeosine, a modified nucleoside present in the dihydrouridine loop (D-loop) of archaeal tRNA. Catalyzes the conversion of 7-cyano-7-deazaguanine (preQ0)-modified tRNA to archaeosine-tRNA, transforming a nitrile group to a formamidine group. Can use neither glutamine nor asparagine as amino donor in vitro, is only able to utilize free ammonium. However, the enzyme might function in vivo with a partner that serves to generate ammonium. This is Archaeosine synthase from Pyrobaculum calidifontis (strain DSM 21063 / JCM 11548 / VA1).